Consider the following 858-residue polypeptide: Bifunctional uridylyltransferase/uridylyl-removing enzyme (858 aa).

Residues 1–324 form a uridylyltransferase region; the sequence is MSASVAEPPP…PATSGVTRVL (324 aa). Positions 325 to 681 are uridylyl-removing; it reads SPGRFVEKQG…ARPSPVGDAL (357 aa). Positions 443-565 constitute an HD domain; sequence VDQHILMVLR…VGSERRLTAL (123 aa). ACT domains are found at residues 682-761 and 790-858; these read QVLV…PEPS and ILSV…AIAV.

The protein belongs to the GlnD family. The cofactor is Mg(2+).

It catalyses the reaction [protein-PII]-L-tyrosine + UTP = [protein-PII]-uridylyl-L-tyrosine + diphosphate. It carries out the reaction [protein-PII]-uridylyl-L-tyrosine + H2O = [protein-PII]-L-tyrosine + UMP + H(+). Its activity is regulated as follows. Uridylyltransferase (UTase) activity is inhibited by glutamine, while glutamine activates uridylyl-removing (UR) activity. Modifies, by uridylylation and deuridylylation, the PII regulatory proteins (GlnB and homologs), in response to the nitrogen status of the cell that GlnD senses through the glutamine level. Under low glutamine levels, catalyzes the conversion of the PII proteins and UTP to PII-UMP and PPi, while under higher glutamine levels, GlnD hydrolyzes PII-UMP to PII and UMP (deuridylylation). Thus, controls uridylylation state and activity of the PII proteins, and plays an important role in the regulation of nitrogen assimilation and metabolism. The sequence is that of Bifunctional uridylyltransferase/uridylyl-removing enzyme from Burkholderia pseudomallei (strain K96243).